Consider the following 360-residue polypeptide: tRNA N6-adenosine threonylcarbamoyltransferase (360 aa).

Positions 115 and 119 each coordinate Fe cation. Residues L137 to G141, D170, G183, and N283 each bind substrate. A Fe cation-binding site is contributed by D311.

The protein belongs to the KAE1 / TsaD family. Fe(2+) is required as a cofactor.

It localises to the cytoplasm. It catalyses the reaction L-threonylcarbamoyladenylate + adenosine(37) in tRNA = N(6)-L-threonylcarbamoyladenosine(37) in tRNA + AMP + H(+). In terms of biological role, required for the formation of a threonylcarbamoyl group on adenosine at position 37 (t(6)A37) in tRNAs that read codons beginning with adenine. Is involved in the transfer of the threonylcarbamoyl moiety of threonylcarbamoyl-AMP (TC-AMP) to the N6 group of A37, together with TsaE and TsaB. TsaD likely plays a direct catalytic role in this reaction. The sequence is that of tRNA N6-adenosine threonylcarbamoyltransferase from Rhizobium meliloti (strain 1021) (Ensifer meliloti).